Here is a 321-residue protein sequence, read N- to C-terminus: Sex-lethal homolog (321 aa).

2 RRM domains span residues 78–156 (TNLI…FARP) and 164–244 (TNLY…VAEE).

In terms of tissue distribution, expressed in gonads and somatic tissues of both sexes. In the ovary, expressed in the last egg chamber of each ovariole. Highly expressed in nurse cells with low expression found in oocytes. Highly expressed in testis with lower expression in testis sheath and vas deferentia.

The protein localises to the nucleus. Unknown; apparently not involved in somatic sex determination. The polypeptide is Sex-lethal homolog (SXL) (Megaselia scalaris (Humpbacked fly)).